The sequence spans 505 residues: Acetylcholine receptor subunit beta (505 aa).

A signal peptide spans methionine 1–glycine 24. Residues serine 25–lysine 245 are Extracellular-facing. A disulfide bond links cysteine 152 and cysteine 166. Residue asparagine 165 is glycosylated (N-linked (GlcNAc...) asparagine). 3 consecutive transmembrane segments (helical) span residues proline 246 to leucine 270, methionine 278 to leucine 295, and tyrosine 312 to leucine 333. Over histidine 334–arginine 473 the chain is Cytoplasmic. The interval lysine 365 to threonine 391 is disordered. Tyrosine 394 is modified (phosphotyrosine; by Tyr-kinases). Residues leucine 474 to leucine 492 form a helical membrane-spanning segment.

It belongs to the ligand-gated ion channel (TC 1.A.9) family. Acetylcholine receptor (TC 1.A.9.1) subfamily. Beta-1/CHRNB1 sub-subfamily. In terms of assembly, pentamer of two alpha chains, and one each of the beta, delta, and gamma (in immature muscle) or epsilon (in mature muscle) chains. The muscle heteropentamer composed of alpha-1, beta-1, delta, epsilon subunits interacts with the alpha-conotoxin ImII.

The protein resides in the postsynaptic cell membrane. It is found in the cell membrane. It catalyses the reaction K(+)(in) = K(+)(out). The enzyme catalyses Na(+)(in) = Na(+)(out). Its function is as follows. After binding acetylcholine, the AChR responds by an extensive change in conformation that affects all subunits and leads to opening of an ion-conducting channel across the plasma membrane. In Bos taurus (Bovine), this protein is Acetylcholine receptor subunit beta (CHRNB1).